The sequence spans 83 residues: Arminin 4364 (83 aa).

The N-terminal stretch at 1 to 18 (MKTVFAILFLAFIALTYA) is a signal peptide. Positions 19 to 55 (RSYEDVKEEIKNEVEKEILEDLEKETDELNERKINDA) are excised as a propeptide. The residue at position 80 (Val80) is a Valine amide.

It belongs to the arminin family. As to expression, expressed in entodermal epithelium along the body column.

The protein localises to the secreted. It is found in the target cell membrane. In terms of biological role, antimicrobial peptide with a broad-spectrum antimicrobial activity. Keeps its antibacterial activity under a wide range of salt concentrations that mimic physiological conditions of human blood, which is surprising, since Hydra is an obligate freshwater animal with nearly no salt tolerance. Does not affect red blood cells. The sequence is that of Arminin 4364 from Hydra vulgaris (Hydra).